The primary structure comprises 641 residues: Mannosyl-oligosaccharide 1,2-alpha-mannosidase IB (641 aa).

Position 2 is an N-acetylthreonine (Thr2). Over 2-36 (TTPALLPLSGRRIPPLNLGPPSFPHHRATLRLSEK) the chain is Cytoplasmic. Residues 37–57 (FILLLILSAFITLCFGAFFFL) traverse the membrane as a helical; Signal-anchor for type II membrane protein segment. Topologically, residues 58-641 (PDSSKHKRFD…STLSGNPAVR (584 aa)) are lumenal. The cysteines at positions 462 and 494 are disulfide-linked. Glu508 acts as the Proton donor in catalysis. Thr619 is a Ca(2+) binding site. Asn631 is a glycosylation site (N-linked (GlcNAc...) asparagine).

It belongs to the glycosyl hydrolase 47 family. Requires Ca(2+) as cofactor.

Its subcellular location is the golgi apparatus membrane. It carries out the reaction N(4)-(alpha-D-Man-(1-&gt;2)-alpha-D-Man-(1-&gt;2)-alpha-D-Man-(1-&gt;3)-[alpha-D-Man-(1-&gt;2)-alpha-D-Man-(1-&gt;3)-[alpha-D-Man-(1-&gt;2)-alpha-D-Man-(1-&gt;6)]-alpha-D-Man-(1-&gt;6)]-beta-D-Man-(1-&gt;4)-beta-D-GlcNAc-(1-&gt;4)-beta-D-GlcNAc)-L-asparaginyl-[protein] (N-glucan mannose isomer 9A1,2,3B1,2,3) + 4 H2O = N(4)-(alpha-D-Man-(1-&gt;3)-[alpha-D-Man-(1-&gt;3)-[alpha-D-Man-(1-&gt;6)]-alpha-D-Man-(1-&gt;6)]-beta-D-Man-(1-&gt;4)-beta-D-GlcNAc-(1-&gt;4)-beta-D-GlcNAc)-L-asparaginyl-[protein] (N-glucan mannose isomer 5A1,2) + 4 beta-D-mannose. The enzyme catalyses N(4)-(alpha-D-Man-(1-&gt;2)-alpha-D-Man-(1-&gt;2)-alpha-D-Man-(1-&gt;3)-[alpha-D-Man-(1-&gt;3)-[alpha-D-Man-(1-&gt;2)-alpha-D-Man-(1-&gt;6)]-alpha-D-Man-(1-&gt;6)]-beta-D-Man-(1-&gt;4)-beta-D-GlcNAc-(1-&gt;4)-beta-D-GlcNAc)-L-asparaginyl-[protein] (N-glucan mannose isomer 8A1,2,3B1,3) + 3 H2O = N(4)-(alpha-D-Man-(1-&gt;3)-[alpha-D-Man-(1-&gt;3)-[alpha-D-Man-(1-&gt;6)]-alpha-D-Man-(1-&gt;6)]-beta-D-Man-(1-&gt;4)-beta-D-GlcNAc-(1-&gt;4)-beta-D-GlcNAc)-L-asparaginyl-[protein] (N-glucan mannose isomer 5A1,2) + 3 beta-D-mannose. Its pathway is protein modification; protein glycosylation. Its activity is regulated as follows. Inhibited by both 1-deoxymannojirimycin and kifunensine. Involved in the maturation of Asn-linked oligosaccharides. Progressively trim alpha-1,2-linked mannose residues from Man(9)GlcNAc(2) to produce Man(5)GlcNAc(2). The protein is Mannosyl-oligosaccharide 1,2-alpha-mannosidase IB (Man1a2) of Mus musculus (Mouse).